The primary structure comprises 212 residues: Methylthioribulose-1-phosphate dehydratase (212 aa).

Residues H97 and H99 each coordinate Zn(2+).

This sequence belongs to the aldolase class II family. MtnB subfamily. Homotetramer. The cofactor is Zn(2+).

It carries out the reaction 5-(methylsulfanyl)-D-ribulose 1-phosphate = 5-methylsulfanyl-2,3-dioxopentyl phosphate + H2O. It functions in the pathway amino-acid biosynthesis; L-methionine biosynthesis via salvage pathway; L-methionine from S-methyl-5-thio-alpha-D-ribose 1-phosphate: step 2/6. Catalyzes the dehydration of methylthioribulose-1-phosphate (MTRu-1-P) into 2,3-diketo-5-methylthiopentyl-1-phosphate (DK-MTP-1-P). The polypeptide is Methylthioribulose-1-phosphate dehydratase (Bacillus cereus (strain B4264)).